The primary structure comprises 85 residues: SPbeta prophage-derived uncharacterized protein YoqG (85 aa).

The protein is SPbeta prophage-derived uncharacterized protein YoqG (yoqG) of Bacillus subtilis (strain 168).